A 509-amino-acid polypeptide reads, in one-letter code: Light-independent protochlorophyllide reductase subunit B (509 aa).

[4Fe-4S] cluster is bound at residue Asp36. The active-site Proton donor is the Asp295. 430-431 provides a ligand contact to substrate; it reads GM.

Belongs to the ChlB/BchB/BchZ family. As to quaternary structure, protochlorophyllide reductase is composed of three subunits; ChlL, ChlN and ChlB. Forms a heterotetramer of two ChlB and two ChlN subunits. Requires [4Fe-4S] cluster as cofactor.

Its subcellular location is the plastid. The protein resides in the chloroplast. It catalyses the reaction chlorophyllide a + oxidized 2[4Fe-4S]-[ferredoxin] + 2 ADP + 2 phosphate = protochlorophyllide a + reduced 2[4Fe-4S]-[ferredoxin] + 2 ATP + 2 H2O. It participates in porphyrin-containing compound metabolism; chlorophyll biosynthesis (light-independent). In terms of biological role, component of the dark-operative protochlorophyllide reductase (DPOR) that uses Mg-ATP and reduced ferredoxin to reduce ring D of protochlorophyllide (Pchlide) to form chlorophyllide a (Chlide). This reaction is light-independent. The NB-protein (ChlN-ChlB) is the catalytic component of the complex. The sequence is that of Light-independent protochlorophyllide reductase subunit B from Mesostigma viride (Green alga).